A 664-amino-acid chain; its full sequence is Alkaline/neutral invertase C, mitochondrial (664 aa).

A phosphoserine mark is found at S41, S125, and S657.

This sequence belongs to the glycosyl hydrolase 100 family. As to expression, expressed in seedlings, roots and flowers.

Its subcellular location is the mitochondrion. The enzyme catalyses Hydrolysis of terminal non-reducing beta-D-fructofuranoside residues in beta-D-fructofuranosides.. Its function is as follows. Mitochondrial invertase that cleaves sucrose into glucose and fructose and is involved in the regulation of aerial tissue development and floral transition. May be modulating hormone balance in relation to the radicle emergence. In Arabidopsis thaliana (Mouse-ear cress), this protein is Alkaline/neutral invertase C, mitochondrial.